A 78-amino-acid chain; its full sequence is MAQPDSSSLAEVLDRVLDKGVVVDVYARLSLVGIEILTVEARVVAASVDTFLHYAEEIAKIEQAELTAGAEAAPTPEA.

This sequence belongs to the gas vesicle GvpA family. In terms of assembly, the gas vesicle shell is 2 nm thick and consists of a single layer of this protein. It forms helical ribs nearly perpendicular to the long axis of the vesicle.

It is found in the gas vesicle shell. Gas vesicles are hollow, gas filled proteinaceous nanostructures found in some microorganisms. During planktonic growth they allow positioning of the organism at a favorable depth for light or nutrient acquisition. GvpA forms the protein shell. This Halorubrum vacuolatum (Natronobacterium vacuolatum) protein is Gas vesicle protein A.